Consider the following 5207-residue polypeptide: MECPSCQHVSKEETPKFCSQCGERLPPAAPIADSENNNSTMASASEGEMECGQELKEEGGPCLFPGSDSWQENPEEPCSKASWTVQESKKKKRKKKKKGNKSASSELASLPLSPASPCHLTLLSNPWPQDTALPHSQAQQSGPTGQPSQPPGTATTPLEGDGLSAPTEVGDSPLQAQALGEAGVATGSEAQSSPQFQDHTEGEDQDASIPSGGRGLSQEGTGPPTSAGEGHSRTEDAAQELLLPESKGGSSEPGTELQTTEQQAGASASMAVDAVAEPANAVKGAGKEMKEKTQRMKQPPATTPPFKTHCQEAETKTKDEMAAAEEKVGKNEQGEPEDLKKPEGKNRSAAAVKNEKEQKNQEADVQEVKASTLSPGGGVTVFFHAIISLHFPFNPDLHKVFIRGGEEFGESKWDSNICELHYTRDLGHDRVLVEGIVCISKKHLDKYIPYKYVIYNGESFEYEFIYKHQQKKGEYVNRCLFIKSSLLGSGDWHQYYDIVYMKPHGRLQKVMNHITDGPRKDLVKGKQIAAALMLDSTFSILQTWDTINLNSFFTQFEQFCFVLQQPMIYEGQAQLWTDLQYREKEVKRYLWQHLKKHVVPLPDGKSTDFLPVDCPVRSKLKTGLIVLFVVEKIELLLEGSLDWLCHLLTSDASSPDEFHRDLSHILGIPQSWRLYLVNLCQRCMDTRTYTWLGALPVLHCCMELAPRHKDAWRQPEDTWAALEGLSFSPFREQMLDTSSLLQFMREKQHLLSIDEPLFRSWFSLLPLSHLVMYMENFIEHLGRFPAHILDCLSGIYYRLPGLEQVLNTQDVQDVQNVQNILEMLLRLLDTYRDKIPEEALSPSYLTVCLKLHEAICSSTKLLKFYELPALSAEIVCRMIRLLSLVDSAGQRDETGNNSVQTVFQGTLAATKRWLREVFTKNMLTSSGASFTYVKEIEVWRRLVEIQFPAEHGWKESLLGDMEWRLTKEEPLSQITAYCNSCWDTKGLEDSVAKTFEKCIIEAVSSACQSQTSILQGFSYSDLRKFGIVLSAVITKSWPRTADNFNDILKHLLTLADVKHVFRLCGTDEKILANVTEDAKRLIAVADSVLTKVVGDLLSGTILVGQLELIIKHKNQFLDIWQLREKSLSPQDEQCAVEEALDWRREELLLLKKEKRCVDSLLKMCGNVKHLIQVDFGVLAVRHSQDLSSKRLNDTVTVRLSTSSNSQRATHYHLSSQVQEMAGKIDLLRDSHIFQLFWREAAEPLSEPKEDQEAAELLSEPEEESERHILELEEVYDYLYQPSYRKFIKLHQDLKSGEVTLAEIDVIFKDFVNKYTDLDSELKIMCTVDHQDQRDWIKDRVEQIKEYHHLHQAVHAAKVILQVKESLGLNGDFSVLNTLLNFTDNFDDFRRETLDQINQELIQAKKLLQDISEARCKGLQALSLRKEFICWVREALGGINELKVFVDLASISAGENDIDVDRVACFHDAVQGYASLLFKLDPSVDFSAFMKHLKKLWKALDKDQYLPRKLCDSARNLEWLKTVNESHGSVERSSLTLATAINQRGIYVIQAPKGGQKISPDTVLHLILPESPGSHEESREYSLEEVKELLNKLMLMSGKKDRNNTEVERFSEVFCSVQRLSQAFIDLHSAGNMLFRTWIAMAYCSPKQGVSLQMDFGLDLVTELKEGGDVTELLAALCRQMEHFLDSWKRFVTQKRMEHFYLNFYTAEQLVYLSTELRKQPPSDAALTMLSFIKSNCTLRDVLRASVGCGSEAARYRMRRVMEELPLMLLSEFSLVDKLRIIMEQSMRCLPAFLPDCLDLETLGHCLAHLAGMGGSPVERCLPRGLQVGQPNLVVCGHSEVLPAALAVYMQTPSQPLPTYDEVLLCTPATTFEEVALLLRRCLTLGSLGHKVYSLLFADQLSYEVARQAEELFHNLCTQQHREDYQLVMVCDGDWEHCYLPSAFSQHKVFVTPQAPLEAIQAYLAGHYRVPKQTLSAAAVFNDRLCVGIVASERAGVGKSLYVKRLHDKMKMQLNVKNVPLKTIRLIDPQVDESRVLGALLPFLDAQYQKVPVLFHLDVTSSVQTGIWVFLFKLLILQYLMDINGKMWLRNPCHLYIVEILERRTSVPSRSSSALRTRVPQFSFLDIFPKVTCRPPKEVIDMELSALRSDTEPGMDLWEFCSETFQRPYQYLRRFNQNQDLDTFQYQEGSVEGTPEECLQHFLFHCGVINPSWSELRNFARFLNYQLRDCEASLFCNPSFIGDTLRGFKKFVVTFMIFMARDFATPSLHTSDQSPGKHMVTMDGVREEDLAPFSLRKRWESEPHPYVFFNDDHTTMTFIGFHLQPNINGSVDAISHLTGKVIKRDVMTRDLYQGLLLQRVPFNVDFDKLPRHKKLERLCLTLGIPQATDPDKTYELTTDNMLKILAIEMRFRCGIPVIIMGETGCGKTRLIKFLSDLRRGGTNADTIKLVKVHGGTTADMIYSRVREAENVAFANKDQHQLDTILFFDEANTTEAISCIKEVLCDHMVDGQPLAEDSGLHIIAACNPYRKHSEEMICRLESAGLGYRVSMEETADRLGSIPLRQLVYRVHALPPSLIPLVWDFGQLSDVAEKLYIQQIVQRLVESISLDENGTRVITEVLCASQGFMRKTEDECSFVSLRDVERCVKVFRWFHEHSAMLLAQLNAFLSKSSVSKNHTERDPVLWSLMLAIGVCYHASLEKKDSYRKAIARFFPKPYDDSRLLLDEITRAQDLFLDGVPLRKTIAKNLALKENVFMMVVCIELKIPLFLVGKPGSSKSLAKTIVADAMQGPAAYSDLFRSLKQVHLVSFQCSPHSTPQGIISTFRQCARFQQGKDLQQYVSVVVLDEVGLAEDSPKMPLKTLHPLLEDGCIEDDPAPHKKVGFVGISNWALDPAKMNRGIFVSRGSPNETELIESAKGICSSDILVQDRVQGYFASFAKAYETVCKRQDKEFFGLRDYYSLIKMVFAAAKASNRKPSPQDIAQAVLRNFSGKDDIQALDIFLANLPEAKCSEEVSPMQLIKQNIFGPSQKVPGGEQEDAESRYLLVLTKNYVALQILQQTFFEGDQQPEIIFGSGFPKDQEYTQLCRNINRVKICMETGKMVLLLNLQNLYESLYDALNQYYVHLGGQKYVDLGLGTHRVKCRVHPNFRLIVIEEKDVVYKHFPIPLINRLEKHYLDINTVLEKWQKSIVEELCAWVEKFINVKAHHFQKRHKYSPSDVFIGYHSDACASVVLQVIERQGPRALTEELHQKVSEEAKSILLNCATPDAVVRLSAYSLGGFAAEWLSQEYFHRQRHNSFADFLQAHLHTADLERHAIFTEITTFSRLLTSHDCEILESEVTGRAPKPTLLWLQQFDTEYSFLKEVRNCLTNTAKCKILIFQTDFEDGIRSAQLIASAKYSVINEINKIRENEDRIFVYFITKLSRVGRGTAYVGFHGGLWQSVHIDDLRRSTLMVSDVTRLQHVTISQLFAPGDLPELGLEHRAEDGHEEAMETEASTSGEVAEVAEEAMETESSEKVGKETSELGGSDVSILDTTRLLRSCVQSAVGMLRDQNESCTRNMRRVVLLLGLLNEDDACHASFLRVSKMRLSVFLKKQEESQFHPLEWLAREACNQDALQEAGTFRHTLWKRVQGAVTPLLASMISFIDRDGNLELLTRPDTPPWARDLWMFIFSDTMLLNIPLVMNNERHKGEMAYIVVQNHMNLSENASNNVPFSWKIKDYLEELWVQAQYITDAEGLPKKFVDIFQQTPLGRFLAQLHGEPQQELLQCYLKDFILLTMRVSTEEELKFLQMALWSCTRKLKAASEAPEEEVSLPWVHLAYQRFRSRLQNFSRILTIYPQVLHSLMEARWNHELAGCEMTLDAFAAMACTEMLTRNTLKPSPQAWLQLVKNLSMPLELICSDEHMQGSGSLAQAVIREVRAQWSRIFSTALFVEHVLLGTESRVPELQGLVTEHVFLLDKCLRENSDVKTHGPFEAVMRTLCECKETASKTLSRFGIQPCSICLGDAKDPVCLPCDHVHCLRCLRAWFASEQMICPYCLTALPDEFSPAVSQAHREAIEKHARFRQMCNSFFVDLVSTICFKDNAPPEKEVIESLLSLLFVQKGRLRDAAQRHCEHTKSLSPFNDVVDKTPVIRSVILKLLLKYSFHDVKDYIQEYLTLLKKKAFITEDKTELYMLFINCLEDSILEKTSAYSRNDELNHLEEEGRFLKAYSPASRGREPANEASVEYLQEVARIRLCLDRAADFLSEPEGGPEMAKEKQCYLQQVKQFCIRVENDWHRVYLVRKLSSQRGMEFVQGLSKPGRPHQWVFPKDVVKQQGLRQDHPGQMDRYLVYGDEYKALRDAVAKAVLECKPLGIKTALKACKTPQSQQSAYFLLTLFREVAILYRSHNASLHPTPEQCEAVSKFIGECKILSPPDISRFATSLVDNSVPLLRAGPSDSNLDGTVTEMAIHAAAVLLCGQNELLEPLKNLAFSPATMAHAFLPTMPEDLLAQARRWKGLERVHWYTCPNGHPCSVGECGRPMEQSICIDCHAPIGGIDHKPRDGFHLVKDKADRTQTGHVLGNPQRRDVVTCDRGLPPVVFLLIRLLTHLALLLGASQSSQALINIIKPPVRDPKGFLQQHILKDLEQLAKMLGHSADETIGVVHLVLRRLLQEQHQLSSRRLLNFDTELSTKEMRNNWEKEIAAVISPELEHLDKTLPTMNNLISQDKRISSNPVAKIIYGDPVTFLPHLPRKSVVHCSKIWSCRKRITVEYLQHIVEQKNGKERVPILWHFLQKEAELRLVKFLPEILALQRDLVKQFQNVQQVEYSSIRGFLSKHSSDGLRQLLHNRITVFLSTWNKLRRSLETNGEINLPKDYCSTDLDLDTEFEILLPRRRGLGLCATALVSYLIRLHNEIVYAVEKLSKENNSYSVDAAEVTELHVISYEVERDLTPLILSNCQYQVEEGRETVQEFDLEKIQRQIVSRFLQGKPRLSLKGIPTLVYRHDWNYEHLFMDIKNKMAQDSLPSSVISAISGQLQSYSDACEVLSVVEVTLGFLSTAGGDPNMQLNVYTQDILQMGDQTIHVLKALNRCQLKHTIALWQFLSAHKSEQLLRLHKEPFGEISSRYKADLSPENAKLLSTFLNQTGLDAFLLELHEMIILKLKNPQTQTEERFRPQWSLRDTLVSYMQTKESEILPEMASQFPEEILLASCVSVWKTAAVLKWNREMR.

Disordered stretches follow at residues 1–20 (MECPSCQHVSKEETPKFCSQ) and 27–365 (PAAP…EADV). Positions 34–43 (SENNNSTMAS) are enriched in polar residues. Basic residues predominate over residues 89-100 (KKKKRKKKKKGN). 2 stretches are compositionally biased toward low complexity: residues 101–117 (KSASSELASLPLSPASP) and 136–157 (SQAQQSGPTGQPSQPPGTATTP). The span at 188–197 (SEAQSSPQFQ) shows a compositional bias: polar residues. Phosphoserine occurs at positions 208 and 217. Residues 248–266 (GGSSEPGTELQTTEQQAGA) show a composition bias toward polar residues. Composition is skewed to basic and acidic residues over residues 285 to 294 (AGKEMKEKTQ), 309 to 346 (HCQEAETKTKDEMAAAEEKVGKNEQGEPEDLKKPEGKN), and 353 to 362 (KNEKEQKNQE). A coiled-coil region spans residues 343–374 (EGKNRSAAAVKNEKEQKNQEADVQEVKASTLS). Residue Lys-1151 forms a Glycyl lysine isopeptide (Lys-Gly) (interchain with G-Cter in SUMO2) linkage. The residue at position 1258 (Ser-1258) is a Phosphoserine. ATP contacts are provided by residues 1995–2000 (GVGKSL), Glu-2098, Asp-2155, and Arg-2216. Ser-2273 is subject to Phosphoserine. 2 residues coordinate ATP: Lys-2499 and Ser-2574. Zn(2+) contacts are provided by Cys-3997, Cys-4000, Cys-4012, His-4014, Cys-4017, Cys-4020, Cys-4032, Cys-4035, Cys-4505, and His-4509. An RING-type zinc finger spans residues 3997–4036 (CSICLGDAKDPVCLPCDHVHCLRCLRAWFASEQMICPYCL). The RZ-type zinc finger occupies 4483 to 4555 (MPEDLLAQAR…VKDKADRTQT (73 aa)). Residue Cys-4516 is the Nucleophile; for E3 ubiquitin-lipopolysaccharide ligase activity of the active site. 2 residues coordinate Zn(2+): Cys-4525 and Cys-4528.

This sequence belongs to the AAA ATPase family. Monomer. Interacts with UBE2L3/UBCH7; UBE2L3/UBCH7 is the most efficient ubiquitin-conjugating enzyme E2 for the ubiquitin ligase activity. Interacts with UBE2N/UBC13; promoting 'Lys-63'-linked ubiquitination of target proteins. In terms of assembly, (Microbial infection) Interacts with M.tuberculosis protein Rv3655c, which impairs caspase-8 activation and suppresses macrophage apoptosis by blocking the extrinsic pathway. Autoubiquitinated. As to expression, widely expressed (at protein level). In terms of tissue distribution, major isoform detected in all tissues examined. Minor isoform with restricted expression.

It localises to the cytoplasm. Its subcellular location is the cytosol. The protein localises to the lipid droplet. The enzyme catalyses S-ubiquitinyl-[E2 ubiquitin-conjugating enzyme]-L-cysteine + [acceptor protein]-L-lysine = [E2 ubiquitin-conjugating enzyme]-L-cysteine + N(6)-ubiquitinyl-[acceptor protein]-L-lysine.. The catalysed reaction is ATP + H2O = ADP + phosphate + H(+). Its pathway is protein modification; protein ubiquitination. In terms of biological role, atypical E3 ubiquitin ligase that can catalyze ubiquitination of both proteins and lipids, and which is involved in various processes, such as lipid metabolism, angiogenesis and cell-autonomous immunity. Acts as a key immune sensor by catalyzing ubiquitination of the lipid A moiety of bacterial lipopolysaccharide (LPS) via its RZ-type zinc-finger: restricts the proliferation of cytosolic bacteria, such as Salmonella, by generating the bacterial ubiquitin coat through the ubiquitination of LPS. Also acts indirectly by mediating the recruitment of the LUBAC complex, which conjugates linear polyubiquitin chains. Ubiquitination of LPS triggers cell-autonomous immunity, such as antibacterial autophagy, leading to degradation of the microbial invader. Involved in lipid metabolism by regulating fat storage and lipid droplet formation; act by inhibiting the lipolytic process. Also regulates lipotoxicity by inhibiting desaturation of fatty acids. Also acts as an E3 ubiquitin-protein ligase via its RING-type zinc finger: mediates 'Lys-63'-linked ubiquitination of target proteins. Involved in the non-canonical Wnt signaling pathway in vascular development: acts by mediating ubiquitination and degradation of FLNA and NFATC2 downstream of RSPO3, leading to inhibit the non-canonical Wnt signaling pathway and promoting vessel regression. Also has ATPase activity; ATPase activity is required for ubiquitination of LPS. The polypeptide is E3 ubiquitin-protein ligase RNF213 (Homo sapiens (Human)).